The primary structure comprises 305 residues: Pseudouridine-5'-phosphate glycosidase (305 aa).

Glu-22 acts as the Proton donor in catalysis. Residues Lys-84 and Val-104 each coordinate substrate. Asp-136 is a Mn(2+) binding site. 138–140 is a substrate binding site; that stretch reads SAD. Lys-157 serves as the catalytic Nucleophile.

This sequence belongs to the pseudouridine-5'-phosphate glycosidase family. Homotrimer. Requires Mn(2+) as cofactor.

It carries out the reaction D-ribose 5-phosphate + uracil = psi-UMP + H2O. Its function is as follows. Catalyzes the reversible cleavage of pseudouridine 5'-phosphate (PsiMP) to ribose 5-phosphate and uracil. Functions biologically in the cleavage direction, as part of a pseudouridine degradation pathway. The chain is Pseudouridine-5'-phosphate glycosidase from Chloroflexus aurantiacus (strain ATCC 29364 / DSM 637 / Y-400-fl).